The following is a 335-amino-acid chain: Ketol-acid reductoisomerase (NADP(+)) 2 (335 aa).

The KARI N-terminal Rossmann domain occupies 1–180 (MKTYYEQDAN…GCTRAGVIET (180 aa)). NADP(+) contacts are provided by residues 24–27 (YGSQ), R47, S51, and 81–84 (DEQQ). H106 is an active-site residue. G132 provides a ligand contact to NADP(+). The region spanning 181–326 (TFQEETETDL…EELREMMSWI (146 aa)) is the KARI C-terminal knotted domain. Mg(2+) contacts are provided by D189, E193, E225, and E229. S250 contacts substrate.

Belongs to the ketol-acid reductoisomerase family. Requires Mg(2+) as cofactor.

The catalysed reaction is (2R)-2,3-dihydroxy-3-methylbutanoate + NADP(+) = (2S)-2-acetolactate + NADPH + H(+). The enzyme catalyses (2R,3R)-2,3-dihydroxy-3-methylpentanoate + NADP(+) = (S)-2-ethyl-2-hydroxy-3-oxobutanoate + NADPH + H(+). The protein operates within amino-acid biosynthesis; L-isoleucine biosynthesis; L-isoleucine from 2-oxobutanoate: step 2/4. Its pathway is amino-acid biosynthesis; L-valine biosynthesis; L-valine from pyruvate: step 2/4. In terms of biological role, involved in the biosynthesis of branched-chain amino acids (BCAA). Catalyzes an alkyl-migration followed by a ketol-acid reduction of (S)-2-acetolactate (S2AL) to yield (R)-2,3-dihydroxy-isovalerate. In the isomerase reaction, S2AL is rearranged via a Mg-dependent methyl migration to produce 3-hydroxy-3-methyl-2-ketobutyrate (HMKB). In the reductase reaction, this 2-ketoacid undergoes a metal-dependent reduction by NADPH to yield (R)-2,3-dihydroxy-isovalerate. The chain is Ketol-acid reductoisomerase (NADP(+)) 2 from Bacillus thuringiensis subsp. konkukian (strain 97-27).